The primary structure comprises 338 residues: Trans-enoyl reductase fsr4 (338 aa).

Position 65–68 (65–68) interacts with NADP(+); it reads KDWK. Residue 147-153 participates in substrate binding; it reads AAFTAAC. Residues 182–185, 205–208, tyrosine 227, and 277–278 each bind NADP(+); these read SSAV, AGRA, and II.

It belongs to the zinc-containing alcohol dehydrogenase family.

Trans-enoyl reductase; part of the gene cluster that mediates the biosynthesis of fusarubins, highly pigmented naphthoquinones responsible for the coloration of the fruiting bodies. The non-reducing polyketide synthase FSR1 is responsible for the condensation of seven acetyl-CoA units to yield a haptaketide. After rings A and B are formed by aldol-type cyclization, the PKS-derived product is released as 6-O-demethylfusarubinaldehyde. Then, two hydroxyl groups at C-5 and C-10 are incorporated by FSR3, and simultaneously hydroxyl groups at C-6 and C-8 are methylated by FSR2. The aldehyde is, on the one hand, reduced by FSR3 to 8-O-methylfusarubin alcohol, which equilibrates mainly with 8-O-methylfusarubin and only small amounts of 8-O-methylnectriafurone. On the other hand, the aldehyde can be oxidized to form 8-O-methylfusarubinic acid, a reaction driven by FSR3 equilibrating with 8-O-methylfusarubinlactone, finally resulting in 8-O-methylanhydrofusarubinlactol after a further reduction step and loss of water. 8-O-Methylfusarubinic acid can also undergo decarboxylation, resulting in 8-O-methyl-13-hydroxynorjavanicin after another hydroxylation step at C-13. Both steps are most likely also accomplished by FSR3. No enzymatic function has been determined so far for either FSR4 and FSR5. Their deletion does not alter the product spectrum, but the possibility that they catalyze specific enzymatic steps during perithecium development cannot be ruled out. FSR4 might possess a regulatory function in the biosynthesis of fusarubins. In Gibberella fujikuroi (strain CBS 195.34 / IMI 58289 / NRRL A-6831) (Bakanae and foot rot disease fungus), this protein is Trans-enoyl reductase fsr4.